Here is a 176-residue protein sequence, read N- to C-terminus: NAD(P)H-quinone oxidoreductase subunit 6, chloroplastic (176 aa).

A run of 5 helical transmembrane segments spans residues 10-30 (FLLV…VLLT), 32-52 (PIYS…FYIL), 61-81 (AQLL…VMFM), 92-112 (LWTI…VSLI), and 152-172 (FFLP…GAIA).

The protein belongs to the complex I subunit 6 family. NDH is composed of at least 16 different subunits, 5 of which are encoded in the nucleus.

It is found in the plastid. The protein resides in the chloroplast thylakoid membrane. It carries out the reaction a plastoquinone + NADH + (n+1) H(+)(in) = a plastoquinol + NAD(+) + n H(+)(out). It catalyses the reaction a plastoquinone + NADPH + (n+1) H(+)(in) = a plastoquinol + NADP(+) + n H(+)(out). In terms of biological role, NDH shuttles electrons from NAD(P)H:plastoquinone, via FMN and iron-sulfur (Fe-S) centers, to quinones in the photosynthetic chain and possibly in a chloroplast respiratory chain. The immediate electron acceptor for the enzyme in this species is believed to be plastoquinone. Couples the redox reaction to proton translocation, and thus conserves the redox energy in a proton gradient. In Gossypium hirsutum (Upland cotton), this protein is NAD(P)H-quinone oxidoreductase subunit 6, chloroplastic (ndhG).